The chain runs to 243 residues: tRNA pseudouridine synthase A (243 aa).

Catalysis depends on Asp53, which acts as the Nucleophile. Residue Tyr111 participates in substrate binding.

This sequence belongs to the tRNA pseudouridine synthase TruA family. In terms of assembly, homodimer.

The enzyme catalyses uridine(38/39/40) in tRNA = pseudouridine(38/39/40) in tRNA. In terms of biological role, formation of pseudouridine at positions 38, 39 and 40 in the anticodon stem and loop of transfer RNAs. The sequence is that of tRNA pseudouridine synthase A from Chlorobium phaeovibrioides (strain DSM 265 / 1930) (Prosthecochloris vibrioformis (strain DSM 265)).